Consider the following 225-residue polypeptide: MKHVAPPPTTEAVFGDRLPLAQRYAEFLATAGVERGLIGPRETDRIWDRHILNSAALGELVESGDRIADIGSGAGLPGIPLALARPDVHVTLIEPMQRRCEFLTEVVDALGVAVIVVRGRAEDPAVRREVGEMDVVTSRAVGSLDKLATWSMGILRESGRMLALKGARAEAEIEENRRVLARAGAVDVRVLRCGADYLNPPATVVEARRATPSNGRGRPGRSSRR.

S-adenosyl-L-methionine contacts are provided by residues glycine 71, leucine 76, 121–122 (AE), and arginine 139. The interval 204-225 (VVEARRATPSNGRGRPGRSSRR) is disordered.

It belongs to the methyltransferase superfamily. RNA methyltransferase RsmG family.

It localises to the cytoplasm. Its function is as follows. Specifically methylates the N7 position of guanine in position 518 of 16S rRNA. The polypeptide is Ribosomal RNA small subunit methyltransferase G (Mycobacterium sp. (strain JLS)).